Consider the following 159-residue polypeptide: Capsid protein (159 aa).

Ser-2 carries the post-translational modification N-acetylserine; by host.

This sequence belongs to the virgaviridae capsid protein family.

The protein resides in the virion. Capsid protein self-assembles to form rod-shaped virions about 18 nm in diameter with a central canal enclosing the viral genomic RNA. This chain is Capsid protein (CP), found in Tobacco mosaic virus (strain Rakkyo) (TMV-R).